Consider the following 436-residue polypeptide: Envelope glycoprotein (436 aa).

Residue Met1 is a signal peptide. The Extracellular segment spans residues 2–436; the sequence is ANPSPHQIYN…GGLTVGGIAA (435 aa). Asn11 and Asn26 each carry an N-linked (GlcNAc...) asparagine; by host glycan. 2 disulfides stabilise this stretch: Cys95-Cys117 and Cys109-Cys122. The segment at 203–255 is disordered; sequence PPQAMGPNLVLPDQKPPSRQSQTGSKVATQRPQTNESAPRSVGPTTMGPKRIG. Residues 219 to 240 show a composition bias toward polar residues; that stretch reads PSRQSQTGSKVATQRPQTNESA. Asn237, Asn272, and Asn277 each carry an N-linked (GlcNAc...) asparagine; by host glycan. The short motif at 282-285 is the CXXC element; sequence CWLC. Residues Asn304, Asn344, Asn360, and Asn380 are each glycosylated (N-linked (GlcNAc...) asparagine; by host).

In terms of assembly, the mature envelope protein (Env) consists of a trimer of SU-TM heterodimers attached by a labile interchain disulfide bond. Specific enzymatic cleavages in vivo yield mature proteins. Envelope glycoproteins are synthesized as an inactive precursor that is N-glycosylated and processed likely by host cell furin or by a furin-like protease in the Golgi to yield the mature SU and TM proteins. The cleavage site between SU and TM requires the minimal sequence [KR]-X-[KR]-R.

Its subcellular location is the virion membrane. The protein resides in the host cell membrane. The surface protein (SU) attaches the virus to the host cell by binding to its receptor. This interaction triggers the refolding of the transmembrane protein (TM) and is thought to activate its fusogenic potential by unmasking its fusion peptide. Fusion occurs at the host cell plasma membrane. Functionally, the transmembrane protein (TM) acts as a class I viral fusion protein. Under the current model, the protein has at least 3 conformational states: pre-fusion native state, pre-hairpin intermediate state, and post-fusion hairpin state. During viral and target cell membrane fusion, the coiled coil regions (heptad repeats) assume a trimer-of-hairpins structure, positioning the fusion peptide in close proximity to the C-terminal region of the ectodomain. The formation of this structure appears to drive apposition and subsequent fusion of viral and target cell membranes. Membranes fusion leads to delivery of the nucleocapsid into the cytoplasm. This is Envelope glycoprotein from Feline leukemia virus (strain C/FS246).